Here is a 348-residue protein sequence, read N- to C-terminus: Fe-S cluster assembly protein DRE2 (348 aa).

Residues methionine 1–valine 185 form an N-terminal SAM-like domain region. Disordered regions lie at residues glutamine 128 to leucine 148 and lysine 162 to lysine 213. The interval valine 186–serine 241 is linker. Residues glutamate 188–serine 206 show a composition bias toward acidic residues. Positions 248, 259, 262, and 264 each coordinate [2Fe-2S] cluster. Residues cysteine 248–cysteine 264 form a fe-S binding site A region. [4Fe-4S] cluster is bound by residues cysteine 311, cysteine 314, cysteine 322, and cysteine 325. 2 short sequence motifs (cx2C motif) span residues cysteine 311–cysteine 314 and cysteine 322–cysteine 325. The tract at residues cysteine 311 to cysteine 325 is fe-S binding site B.

It belongs to the anamorsin family. As to quaternary structure, monomer. Interacts with TAH18. Interacts with MIA40. The cofactor is [2Fe-2S] cluster. It depends on [4Fe-4S] cluster as a cofactor.

The protein localises to the cytoplasm. Its subcellular location is the mitochondrion intermembrane space. Component of the cytosolic iron-sulfur (Fe-S) protein assembly (CIA) machinery required for the maturation of extramitochondrial Fe-S proteins. Part of an electron transfer chain functioning in an early step of cytosolic Fe-S biogenesis, facilitating the de novo assembly of a [4Fe-4S] cluster on the scaffold complex CFD1-NBP35. Electrons are transferred to DRE2 from NADPH via the FAD- and FMN-containing protein TAH18. TAH18-DRE2 are also required for the assembly of the diferric tyrosyl radical cofactor of ribonucleotide reductase (RNR), probably by providing electrons for reduction during radical cofactor maturation in the catalytic small subunit RNR2. This chain is Fe-S cluster assembly protein DRE2, found in Lachancea thermotolerans (strain ATCC 56472 / CBS 6340 / NRRL Y-8284) (Yeast).